The chain runs to 220 residues: Chalcone--flavanone isomerase B (220 aa).

3 residues coordinate substrate: threonine 50, asparagine 115, and threonine 192.

This sequence belongs to the chalcone isomerase family.

It catalyses the reaction a chalcone = a flavanone.. It functions in the pathway secondary metabolite biosynthesis; flavonoid biosynthesis. Functionally, catalyzes the intramolecular cyclization of bicyclic chalcones into tricyclic (S)-flavanones. Responsible for the isomerization of 4,2',4',6'-tetrahydroxychalcone (also termed chalcone) into naringenin. This is Chalcone--flavanone isomerase B (CHI2) from Petunia hybrida (Petunia).